An 882-amino-acid chain; its full sequence is Piwi-like protein 3 (882 aa).

A compositionally biased stretch (basic residues) spans 1 to 15; it reads MPGRARTRARGRARR. A disordered region spans residues 1–91; sequence MPGRARTRAR…EAGLHTAPLQ (91 aa). Residues 32–46 show a composition bias toward polar residues; that stretch reads SATTQEPPQLQSTPR. Residues 293-406 form the PAZ domain; that stretch reads TAYDFIKRTS…LIPQLCHMTG (114 aa). The Piwi domain maps to 578-868; the sequence is KVICILPNDD…LAYLVGQSIH (291 aa).

The protein belongs to the argonaute family. Piwi subfamily. In terms of tissue distribution, expressed in testis.

Its subcellular location is the cytoplasm. May play a role during spermatogenesis by repressing transposable elements and preventing their mobilization, which is essential for the germline integrity. Acts via the piRNA metabolic process, which mediates the repression of transposable elements during meiosis by forming complexes composed of piRNAs and Piwi proteins and govern the methylation and subsequent repression of transposons. Directly binds piRNAs, a class of 24 to 30 nucleotide RNAs that are generated by a Dicer-independent mechanism and are primarily derived from transposons and other repeated sequence elements. Besides their function in transposable elements repression, piRNAs are probably involved in other processes during meiosis such as translation regulation. The protein is Piwi-like protein 3 (PIWIL3) of Homo sapiens (Human).